The chain runs to 3029 residues: Polycystin-1-related protein (3029 aa).

The N-terminal stretch at Met1–Ala21 is a signal peptide. Over Lys22 to Pro1685 the chain is Extracellular. A WSC domain is found at Val29–Ala121. 2 PKD domains span residues Glu364–Val450 and Asp546–Tyr634. One can recognise an REJ domain in the interval Cys633–Thr1476. Disordered stretches follow at residues Arg754–Glu773, Cys909–Pro931, and Thr989–Pro1051. Residues Val918 to Pro931 show a composition bias toward polar residues. Over residues Ser997–Ser1013 the composition is skewed to acidic residues. Polar residues predominate over residues Thr1020–Lys1047. Residues Arg1525–His1671 enclose the GAIN-B domain. 2 disulfide bridges follow: Cys1624-Cys1651 and Cys1639-Cys1653. The interval Cys1624–His1671 is GPS. The helical transmembrane segment at Leu1686–Val1706 threads the bilayer. The Cytoplasmic segment spans residues Lys1707–Arg1895. The 119-residue stretch at Ser1733–Phe1851 folds into the PLAT domain. A helical transmembrane segment spans residues Leu1896–Pro1916. Topologically, residues Lys1917 to Ser1933 are extracellular. A helical membrane pass occupies residues Ile1934 to Phe1954. Topologically, residues Phe1955–Gly2101 are cytoplasmic. Residues Phe2102–Ile2122 form a helical membrane-spanning segment. Over Trp2123–Leu2140 the chain is Extracellular. The helical transmembrane segment at Val2141 to Phe2161 threads the bilayer. Residues Tyr2162 to Tyr2250 are Cytoplasmic-facing. The helical transmembrane segment at Val2251–Val2271 threads the bilayer. The Extracellular portion of the chain corresponds to Ala2272–Lys2462. The helical transmembrane segment at Leu2463–Met2483 threads the bilayer. The Cytoplasmic portion of the chain corresponds to Thr2484–Gln2496. A helical membrane pass occupies residues Leu2497–Leu2517. The Extracellular segment spans residues Tyr2518–Gln2538. The helical transmembrane segment at Ile2539–Ile2559 threads the bilayer. At Arg2560–Leu2586 the chain is on the cytoplasmic side. The chain crosses the membrane as a helical span at residues Ala2587–Phe2607. Over Gly2608–Tyr2651 the chain is Extracellular. A helical transmembrane segment spans residues Phe2652–Leu2672. The Cytoplasmic segment spans residues His2673 to Met3029. The tract at residues Lys2704–Leu2726 is disordered. Acidic residues predominate over residues Asp2716–Leu2726.

This sequence belongs to the polycystin family. In terms of assembly, heterodimer of 2 chains generated by proteolytic processing; the large extracellular N-terminal fragment and the membrane-bound C-terminal fragment predominantly remain associated and non-covalently linked. In terms of processing, autoproteolytically processed at the GPS region of the GAIN-B domain; this cleavage modulates receptor activity. In terms of tissue distribution, component of the acid-insoluble and acid-soluble organic matrix of the aragonitic skeleton (at protein level).

The protein resides in the membrane. The chain is Polycystin-1-related protein from Acropora millepora (Staghorn coral).